A 425-amino-acid chain; its full sequence is Malate transporter MleP (425 aa).

11 helical membrane-spanning segments follow: residues 11–31 (GISLPLYAFFVAVIIVVTLLG), 35–55 (LDMVGLTLLLVTLGHLLYFIG), 65–85 (LGGGSVFTLIGATLLSFFHIV), 96–116 (FMGGKFGFLDFYIAALICGSI), 134–154 (IALITMVIGFFSVGLVGMLIG), 196–216 (IFSQLAPAVTFGNILAIIGAL), 246–266 (IKLDAQQIGTGMLFAFALLMA), 269–289 (ILNKFFPNIHQYAFMIIIVFI), 310–330 (VIMTNLTHAVLAGIGLALIDL), 339–359 (WQFVVLCLTSVVVMGLASWFL), and 401–421 (FAQMANRLCGAIVLIFGGILI).

Belongs to the 2-hydroxycarboxylate transporter (2-HCT) (TC 2.A.24) family.

The protein resides in the cell membrane. The enzyme catalyses (S)-lactate(in) + (S)-malate(out) = (S)-lactate(out) + (S)-malate(in). It catalyses the reaction (R)-lactate(in) + (S)-malate(out) = (R)-lactate(out) + (S)-malate(in). It carries out the reaction glycolate(in) + (S)-malate(out) = glycolate(out) + (S)-malate(in). Secondary transporter involved in malolactic fermentation. Catalyzes the uptake of divalent malate into the cell coupled to the exit of monovalent lactate, a product of malate degradation (precursor/product exchange). The malate/lactate exchange is electrogenic and results in the generation of a membrane potential. Is highly selective for the S-enantiomer of malate. In the absence of lactate, MleP can also catalyze the proton-dependent transport of malate. In vitro, transports a range of substrates that contain the 2-hydroxycarboxylate motif, HO-CR(2)-COO(-), with a preference for malate, lactate and glycolate. Modification of the OH or the COO(-) groups of the 2-hydroxycarboxylate motif drastically reduces the affinity of the transporter for the substrates, indicating their relevance in substrate recognition. Significant activity is also observed with some 2-oxocarboxylates. Transports only poorly citromalate. Citrate binds to MleP but is not translocated. This Lactococcus lactis subsp. lactis (strain IL1403) (Streptococcus lactis) protein is Malate transporter MleP.